The chain runs to 212 residues: MKKIAVLISGQGTNLQTIIDACHSGDIPAKIACVISNKADAYGLVRAKQAQIPQAVFLRKNFSNNLEMDDAIGDYLQSLAVDLIVLAGYMKILTPKFTQRFAGKILNIHPSLLPKYAGLNTYQRAIEAGDNEHGTTVHFVNEEVDGGAIVLQAKVPIFPEDSIEEVEARTREQEYQIYPLVIKWFTEGRLRLKDNLAYLDGKALPKSGYANE.

12-14 is a binding site for N(1)-(5-phospho-beta-D-ribosyl)glycinamide; the sequence is GTN. (6R)-10-formyltetrahydrofolate-binding positions include 90 to 93 and Asn107; that span reads MKIL. The active-site Proton donor is His109.

Belongs to the GART family.

The catalysed reaction is N(1)-(5-phospho-beta-D-ribosyl)glycinamide + (6R)-10-formyltetrahydrofolate = N(2)-formyl-N(1)-(5-phospho-beta-D-ribosyl)glycinamide + (6S)-5,6,7,8-tetrahydrofolate + H(+). It participates in purine metabolism; IMP biosynthesis via de novo pathway; N(2)-formyl-N(1)-(5-phospho-D-ribosyl)glycinamide from N(1)-(5-phospho-D-ribosyl)glycinamide (10-formyl THF route): step 1/1. Functionally, catalyzes the transfer of a formyl group from 10-formyltetrahydrofolate to 5-phospho-ribosyl-glycinamide (GAR), producing 5-phospho-ribosyl-N-formylglycinamide (FGAR) and tetrahydrofolate. The protein is Phosphoribosylglycinamide formyltransferase of Haemophilus influenzae (strain ATCC 51907 / DSM 11121 / KW20 / Rd).